We begin with the raw amino-acid sequence, 262 residues long: MSDNHRLDGKVALVTGAGRGIGAAIAVALGERGAKVVVNYAHSREAAEKVVEQIKANGTDAIAIQADVGDPEATAKLMAETVRHFGYLDIVSSNAGIVSFGHLKDVTPEEFDRVFRVNTRGQFFVAREAYRHMREGGRIILTSSNTACVKGVPKHAVYSGSKGAIDTFVRCMAIDCGDKKITVNAVAPGAIKTDMFLAVSREYIPNGETFTDEQVDECAAWLSPLNRVGLPVDVARVVSFLASDTAEWVSGKIIGVDGGAFR.

NADP(+) is bound by residues I21, D67, N94, and R127. Residues S143 and S144 each act as proton donor in the active site. 4 residues coordinate NADP(+): Y158, K162, I191, and T193. Residue Y158 is the Proton acceptor of the active site. Catalysis depends on K162, which acts as the Lowers pKa of active site Tyr.

Belongs to the short-chain dehydrogenases/reductases (SDR) family.

It localises to the cytoplasm. The protein resides in the cytosol. The enzyme catalyses (4S,8R)-2,13,16,20-tetrahydroxy-7,9-dioxapentacyclo[10.8.0.0(3,10).0(4,8).0(14,19)]icosa-1(12),2,5,10,13,16,19-heptaen-18-one + NADPH + H(+) = (4S,8R,16R)-2,13,16,20-tetrahydroxy-7,9-dioxapentacyclo[10.8.0.0(3,10).0(4,8).0(14,19)]icosa-1(12),2,5,10,13,19-hexaen-18-one + NADP(+). The protein operates within mycotoxin biosynthesis; aflatoxin biosynthesis. Functionally, cytochrome P450 monooxygenase; part of the gene cluster that mediates the biosynthesis of aflatoxins, a group of polyketide-derived furanocoumarins, and part of the most toxic and carcinogenic compounds among the known mycotoxins. The four major aflatoxins produced by A.parasiticus are aflatoxin B1 (AFB1), aflatoxin B2 (AFB2), aflatoxin G1 (AFG1) and aflatoxin G2 (AFG2). Within the aflatoxin pathway, with the cytochrome P450 monooxygenase aflN, the versicolorin reductase aflM, is involved in conversion of VERA to demethylsterigmatocystin (DMST). The biosynthesis of aflatoxins begins with the norsolorinic acid synthase aflC that combines a hexanoyl starter unit produced by the fatty acid synthase aflA/aflB and 7 malonyl-CoA extender units to synthesize the precursor NOR. The second step is the conversion of NOR to averantin and requires the norsolorinic acid ketoreductase aflD, which catalyzes the dehydration of norsolorinic acid to form (1'S)-averantin. The norsolorinic acid reductases aflE and aflF may also play a role in the conversion of NOR to AVN. The cytochrome P450 monooxygenase aflG then catalyzes the hydroxylation of AVN to 5'hydroxyaverantin (HAVN). The next step is performed by the 5'-hydroxyaverantin dehydrogenase aflH that transforms HAVN to 5'-oxoaverantin (OAVN) which is further converted to averufin (AVF) by aflK that plays a dual role in the pathway, as a 5'-oxoaverantin cyclase that mediates conversion of 5'-oxoaverantin, as well as a versicolorin B synthase in a later step in the pathway. The averufin oxidase aflI catalyzes the conversion of AVF to versiconal hemiacetal acetate (VHA). VHA is then the substrate for the versiconal hemiacetal acetate esterase aflJ to yield versiconal (VAL). Versicolorin B synthase aflK then converts VAL to versicolorin B (VERB) by closing the bisfuran ring of aflatoxin which is required for DNA-binding, thus giving to aflatoxin its activity as a mutagen. Then, the activity of the versicolorin B desaturase aflL leads to versicolorin A (VERA). A branch point starts from VERB since it can also be converted to dihydrodemethylsterigmatocystin (DMDHST), probably also by aflL, VERA being a precursor for aflatoxins B1 and G1, and DMDHST for aflatoxins B2 and G2. Next, the versicolorin reductase aflM and the cytochrome P450 monooxygenase aflN are involved in conversion of VERA to demethylsterigmatocystin (DMST). AflX and aflY seem also involved in this step, through probable aflX-mediated epoxide ring-opening step following versicolorin A oxidation and aflY-mediated Baeyer-Villiger oxidation required for the formation of the xanthone ring. The methyltransferase aflO then leads to the modification of DMST to sterigmatocystin (ST), and of DMDHST to dihydrosterigmatocystin (DHST). Both ST and DHST are then substrates of the O-methyltransferase aflP to yield O-methylsterigmatocystin (OMST) and dihydro-O-methylsterigmatocystin (DHOMST), respectively. Finally OMST is converted to aflatoxins B1 and G1, and DHOMST to aflatoxins B2 and G2, via the action of several enzymes including O-methylsterigmatocystin oxidoreductase aflQ, the cytochrome P450 monooxygenase aflU, but also the NADH-dependent flavin oxidoreductase nadA which is specifically required for the synthesis of AFG1. The sequence is that of Versicolorin reductase 1 from Aspergillus parasiticus (strain ATCC 56775 / NRRL 5862 / SRRC 143 / SU-1).